Here is a 396-residue protein sequence, read N- to C-terminus: Acetyl-CoA acetyltransferase (396 aa).

C88 (acyl-thioester intermediate) is an active-site residue. Catalysis depends on proton acceptor residues H352 and C382.

Belongs to the thiolase-like superfamily. Thiolase family. Homotetramer.

The catalysed reaction is 2 acetyl-CoA = acetoacetyl-CoA + CoA. It functions in the pathway biopolymer metabolism; poly-(R)-3-hydroxybutanoate biosynthesis. In terms of biological role, when expressed in E.coli with Synechocystis PhaB, PhaC and PhaE confers the ability to synthesize up to 12% (w/w) poly(3-hydroxybutyrate) (PHB) depending on the carbon source. The polypeptide is Acetyl-CoA acetyltransferase (Synechocystis sp. (strain ATCC 27184 / PCC 6803 / Kazusa)).